Reading from the N-terminus, the 309-residue chain is Extracellular agarase (309 aa).

Positions 1–30 form a signal peptide, tat-type signal; that stretch reads MVNRRDLIKWSAVALGAGAGLAGPAPAAHA. The GH16 domain occupies 33–309; sequence LEWEQYPVPA…YRWVRTYQAV (277 aa). The active-site Nucleophile is Glu155. Glu160 functions as the Proton donor in the catalytic mechanism.

This sequence belongs to the glycosyl hydrolase 16 family. In terms of processing, predicted to be exported by the Tat system. The position of the signal peptide cleavage has been experimentally proven.

Its subcellular location is the secreted. It carries out the reaction Hydrolysis of (1-&gt;4)-beta-D-galactosidic linkages in agarose, giving the tetramer as the predominant product.. This chain is Extracellular agarase (dagA), found in Streptomyces coelicolor (strain ATCC BAA-471 / A3(2) / M145).